A 275-amino-acid polypeptide reads, in one-letter code: Calcium uniporter protein, mitochondrial (275 aa).

The N-terminal 28 residues, 1 to 28 (MNSFVIRNGFGLVRTFNTRLFTTSTQNL), are a transit peptide targeting the mitochondrion. At 29-165 (EGELKTILGQ…DRKAHRRATA (137 aa)) the chain is on the mitochondrial matrix side. The stretch at 125–157 (VGLNKLIESKKSEINSLRQKIQPLEEKKQVIDR) forms a coiled coil. The helical transmembrane segment at 166-186 (IIWTGLGYCFAQAAILARLTW) threads the bilayer. Topologically, residues 187–192 (WDLSWD) are mitochondrial intermembrane. A Selectivity filter motif is present at residues 191–199 (WDIIEPVSY). The helical transmembrane segment at 193-213 (IIEPVSYFLTFGSVLIGYTYF) threads the bilayer. A Ca(2+)-binding site is contributed by Glu195. Topologically, residues 214–275 (TMTKTEFTYE…ELATKYDHTH (62 aa)) are mitochondrial matrix. Residues 244 to 270 (PKEDYENLVQAIDKKEKELKELELATK) adopt a coiled-coil conformation.

Belongs to the MCU (TC 1.A.77) family. In terms of assembly, homooligomer.

It is found in the mitochondrion inner membrane. The catalysed reaction is Ca(2+)(in) = Ca(2+)(out). Its activity is regulated as follows. Inhibited by ruthenium red or its derivative Ru360. Its function is as follows. Mitochondrial inner membrane calcium uniporter that mediates calcium uptake into mitochondria. Constitutes a pore-forming and calcium-conducting subunit. Mitochondrial calcium homeostasis plays key roles in cellular physiology and regulates cell bioenergetics, cytoplasmic calcium signals and activation of cell death pathways. Sufficient to operate as a pore-forming channel without the need of calcium-sensor or auxiliary subunit. The sequence is that of Calcium uniporter protein, mitochondrial from Dictyostelium discoideum (Social amoeba).